A 123-amino-acid polypeptide reads, in one-letter code: uncharacterized protein (123 aa).

The chain crosses the membrane as a helical span at residues 5–25 (GTLVIIFAIVLILCIMLLFFY). Residues 33-54 (PGVLPPPIPPPTPPPPKKKYDH) are disordered. The span at 35–47 (VLPPPIPPPTPPP) shows a compositional bias: pro residues.

This sequence belongs to the asfivirus CP123L family.

The protein localises to the host membrane. Its subcellular location is the virion. This is an uncharacterized protein from African swine fever virus (isolate Warthog/Namibia/Wart80/1980) (ASFV).